A 249-amino-acid polypeptide reads, in one-letter code: Ribosomal RNA small subunit methyltransferase G (249 aa).

S-adenosyl-L-methionine contacts are provided by Gly86, Phe91, and Arg178.

The protein belongs to the methyltransferase superfamily. RNA methyltransferase RsmG family.

It localises to the cytoplasm. Functionally, specifically methylates the N7 position of a guanine in 16S rRNA. In Bifidobacterium adolescentis (strain ATCC 15703 / DSM 20083 / NCTC 11814 / E194a), this protein is Ribosomal RNA small subunit methyltransferase G.